Consider the following 369-residue polypeptide: Protein-glutamate methylesterase/protein-glutamine glutaminase 1 (369 aa).

The Response regulatory domain occupies 11–128; it reads RVLIVDDSAA…DLERQEASIR (118 aa). A 4-aspartylphosphate modification is found at Asp-62. A disordered region spans residues 136 to 168; it reads ATETTRRRSQPEPRPLAPGPKLTADEILPARPP. Positions 170-358 constitute a CheB-type methylesterase domain; it reads PVPETMPVVC…LDRLAARIME (189 aa). Active-site residues include Ser-183, His-209, and Asp-305.

Belongs to the CheB family. Post-translationally, phosphorylated by CheA. Phosphorylation of the N-terminal regulatory domain activates the methylesterase activity.

The protein resides in the cytoplasm. It carries out the reaction [protein]-L-glutamate 5-O-methyl ester + H2O = L-glutamyl-[protein] + methanol + H(+). It catalyses the reaction L-glutaminyl-[protein] + H2O = L-glutamyl-[protein] + NH4(+). Functionally, involved in chemotaxis. Part of a chemotaxis signal transduction system that modulates chemotaxis in response to various stimuli. Catalyzes the demethylation of specific methylglutamate residues introduced into the chemoreceptors (methyl-accepting chemotaxis proteins or MCP) by CheR. Also mediates the irreversible deamidation of specific glutamine residues to glutamic acid. The chain is Protein-glutamate methylesterase/protein-glutamine glutaminase 1 from Cereibacter sphaeroides (strain ATCC 17023 / DSM 158 / JCM 6121 / CCUG 31486 / LMG 2827 / NBRC 12203 / NCIMB 8253 / ATH 2.4.1.) (Rhodobacter sphaeroides).